The sequence spans 180 residues: Protein PHLOEM PROTEIN 2-LIKE A9 (180 aa).

Residues Met1 to Arg21 form a disordered region. Over residues His9–Arg21 the composition is skewed to basic and acidic residues.

This Arabidopsis thaliana (Mouse-ear cress) protein is Protein PHLOEM PROTEIN 2-LIKE A9 (PP2A9).